The following is a 469-amino-acid chain: Putative dipeptidase MW1694 (469 aa).

A Zn(2+)-binding site is contributed by histidine 84. Aspartate 86 is a catalytic residue. Aspartate 115 contributes to the Zn(2+) binding site. Catalysis depends on glutamate 149, which acts as the Proton acceptor. 3 residues coordinate Zn(2+): glutamate 150, aspartate 173, and histidine 440.

Belongs to the peptidase M20A family. It depends on Zn(2+) as a cofactor.

This chain is Putative dipeptidase MW1694, found in Staphylococcus aureus (strain MW2).